The primary structure comprises 315 residues: piRNA biogenesis protein EXD1 (315 aa).

Residues 141-228 (IYIFDIQVMQ…ECLTNYLGLQ (88 aa)) enclose the 3'-5' exonuclease domain.

This sequence belongs to the EXD1 family. In terms of assembly, homodimer. Component of the PET complex, at least composed of EXD1, SIWI, TDRD12 and piRNAs.

It localises to the cytoplasm. RNA-binding component of the PET complex, a multiprotein complex required for the processing of piRNAs during spermatogenesis. The piRNA metabolic process mediates the repression of transposable elements during meiosis by forming complexes composed of piRNAs and Piwi proteins and governs the methylation and subsequent repression of transposable elements, preventing their mobilization, which is essential for the germline integrity. The PET complex is required during the secondary piRNAs metabolic process for the PIWIL2 slicing-triggered loading of PIWIL4 piRNAs. In the PET complex, EXD1 probably acts as an RNA adapter. EXD1 is an inactive exonuclease. This Bombyx mori (Silk moth) protein is piRNA biogenesis protein EXD1.